A 77-amino-acid polypeptide reads, in one-letter code: MAVGISPGELRELTDDELTERLRESKEELFNLRFQMATGQLTNNRRLRTVRQEIARVYTVLRERELGLASGPDGKES.

Belongs to the universal ribosomal protein uL29 family.

In Mycobacterium avium (strain 104), this protein is Large ribosomal subunit protein uL29.